A 38-amino-acid polypeptide reads, in one-letter code: Photosystem II reaction center protein L (38 aa).

A helical membrane pass occupies residues 17-37 (SLYWGLLLIFVLAVLFSNYFF).

It belongs to the PsbL family. PSII is composed of 1 copy each of membrane proteins PsbA, PsbB, PsbC, PsbD, PsbE, PsbF, PsbH, PsbI, PsbJ, PsbK, PsbL, PsbM, PsbT, PsbX, PsbY, PsbZ, Psb30/Ycf12, at least 3 peripheral proteins of the oxygen-evolving complex and a large number of cofactors. It forms dimeric complexes.

It localises to the plastid. Its subcellular location is the chloroplast thylakoid membrane. In terms of biological role, one of the components of the core complex of photosystem II (PSII). PSII is a light-driven water:plastoquinone oxidoreductase that uses light energy to abstract electrons from H(2)O, generating O(2) and a proton gradient subsequently used for ATP formation. It consists of a core antenna complex that captures photons, and an electron transfer chain that converts photonic excitation into a charge separation. This subunit is found at the monomer-monomer interface and is required for correct PSII assembly and/or dimerization. In Antirrhinum majus (Garden snapdragon), this protein is Photosystem II reaction center protein L.